Reading from the N-terminus, the 306-residue chain is Acetyl-coenzyme A carboxylase carboxyl transferase subunit beta (306 aa).

The region spanning 27–296 (LWHKCPSCEA…PRFVAPVIEP (270 aa)) is the CoA carboxyltransferase N-terminal domain. Zn(2+)-binding residues include cysteine 31, cysteine 34, cysteine 50, and cysteine 53. The C4-type zinc finger occupies 31–53 (CPSCEAVLYRPELEKTLDVCPKC).

Belongs to the AccD/PCCB family. In terms of assembly, acetyl-CoA carboxylase is a heterohexamer composed of biotin carboxyl carrier protein (AccB), biotin carboxylase (AccC) and two subunits each of ACCase subunit alpha (AccA) and ACCase subunit beta (AccD). Requires Zn(2+) as cofactor.

Its subcellular location is the cytoplasm. It catalyses the reaction N(6)-carboxybiotinyl-L-lysyl-[protein] + acetyl-CoA = N(6)-biotinyl-L-lysyl-[protein] + malonyl-CoA. Its pathway is lipid metabolism; malonyl-CoA biosynthesis; malonyl-CoA from acetyl-CoA: step 1/1. Its function is as follows. Component of the acetyl coenzyme A carboxylase (ACC) complex. Biotin carboxylase (BC) catalyzes the carboxylation of biotin on its carrier protein (BCCP) and then the CO(2) group is transferred by the transcarboxylase to acetyl-CoA to form malonyl-CoA. In Pseudomonas syringae pv. syringae (strain B728a), this protein is Acetyl-coenzyme A carboxylase carboxyl transferase subunit beta.